The primary structure comprises 203 residues: V-type ATP synthase subunit D (203 aa).

This sequence belongs to the V-ATPase D subunit family.

Functionally, produces ATP from ADP in the presence of a proton gradient across the membrane. The polypeptide is V-type ATP synthase subunit D (Streptococcus pneumoniae (strain CGSP14)).